The chain runs to 1099 residues: Inverted formin-2 (1099 aa).

The 330-residue stretch at 1–330 folds into the GBD/FH3 domain; the sequence is MSLTEGAHTK…RAVLLADDCQ (330 aa). Basic and acidic residues-rich tracts occupy residues 348–359 and 367–385; these read SSKEKRKTDKCT and QTDKPKEESCEGKTVKKDP. 3 disordered regions span residues 348–391, 432–509, and 1000–1019; these read SSKE…SGIP, PSPP…PTPP, and AEKRKQQIADEETKRQKGEN. The FH1 domain occupies 426-569; it reads TCSSVLPSPP…GMLPPPPPLP (144 aa). The span at 452-499 shows a compositional bias: pro residues; that stretch reads PLPPPPPPLPGTELSPPPPGMVALSLPPPPPPLPGMGGMLPPPPPPLP. Residues 621–1009 form the FH2 domain; sequence FLKVNKPTLK…AEKRKQQIAD (389 aa). Residues 907–1019 adopt a coiled-coil conformation; that stretch reads LKKLRDLQNK…EETKRQKGEN (113 aa). The WH2 domain occupies 1037-1052; it reads DDLLADIKKGFQLRKT. A disordered region spans residues 1064 to 1085; it reads KTLSSETNRTDIQHVGKRPEVP. Residues 1071 to 1083 are compositionally biased toward basic and acidic residues; the sequence is NRTDIQHVGKRPE.

Belongs to the formin homology family.

The protein is Inverted formin-2 (inf2) of Xenopus laevis (African clawed frog).